We begin with the raw amino-acid sequence, 1147 residues long: uncharacterized protein (1147 aa).

Disordered stretches follow at residues 226 to 245, 255 to 297, 431 to 617, 647 to 670, 705 to 945, 1003 to 1032, and 1060 to 1090; these read FGQGQQDLDEGEAGAGGQVD, IQGT…QEKA, SQHP…QSCI, EEMDDHEEGGELRENHPDAQDPVR, HRHR…RRLQ, RQQQEEFRRKCQELQRKKQQEEAERAEAEK, and YQRRKQEAEEKTRWEAEDRRQKEKEAARLAQ. Residues 268–296 are compositionally biased toward basic and acidic residues; that stretch reads WQKDETQTEDTSKDNHHCIHTSKENHQEK. Over residues 431–441 the composition is skewed to basic residues; it reads SQHPPKGKAQR. The segment covering 538–549 has biased composition (low complexity); the sequence is PAGGALPAAGQA. The segment covering 584–603 has biased composition (polar residues); it reads LNETSPLTQKPENQGAQQSL. Residues 743-752 show a composition bias toward polar residues; the sequence is NQKTSNNISN. Positions 743–804 form a coiled coil; the sequence is NQKTSNNISN…ESKAEKKSQL (62 aa). Over residues 768 to 802 the composition is skewed to basic and acidic residues; it reads TDKSKAPKREKEGKLHEEAEAAVGKSKESKAEKKS. The span at 807-819 shows a compositional bias: basic residues; sequence KGKKTGAKGKRTR. Residues 870–884 show a composition bias toward polar residues; that stretch reads SQVSIDGRSSPTQTA. Over residues 895–945 the composition is skewed to basic and acidic residues; that stretch reads DRSHEDPSKAFLVKREQEKASRDRLRAERAEMRRLEVERKRREQEEQRRLQ. The stretch at 907-1112 forms a coiled coil; it reads VKREQEKASR…QKDALKKHLH (206 aa).

This is an uncharacterized protein from Bos taurus (Bovine).